The primary structure comprises 122 residues: Large ribosomal subunit protein uL14c (122 aa).

This sequence belongs to the universal ribosomal protein uL14 family. In terms of assembly, part of the 50S ribosomal subunit.

It localises to the plastid. The protein localises to the chloroplast. In terms of biological role, binds to 23S rRNA. The protein is Large ribosomal subunit protein uL14c of Psilotum nudum (Whisk fern).